A 514-amino-acid polypeptide reads, in one-letter code: Serine--tRNA ligase, cytoplasmic (514 aa).

An N-acetylmethionine modification is found at M1. Residues 9-61 (RVDKGGDPALIRETQEKRFKDPGLVDQLVKADSEWRRCRFRADNLNKLKNLCS) are interaction with tRNA. S241 carries the phosphoserine modification. Positions 271 and 302 each coordinate L-serine. ATP contacts are provided by residues 302 to 304 (RQE) and 318 to 321 (VHQF). Residue K323 is modified to N6-acetyllysine. L-serine is bound at residue E325. 391 to 394 (ELVS) contacts ATP. N427 contributes to the L-serine binding site. The segment at 471–514 (VKPAPIDQEPSKKQKKQHEGSKKKAAARDVALESRLQNMEVTDA) is disordered. The segment covering 479–502 (EPSKKQKKQHEGSKKKAAARDVAL) has biased composition (basic and acidic residues). The short motif at 482 to 494 (KKQKKQHEGSKKK) is the Nuclear localization signal element. The segment covering 505–514 (RLQNMEVTDA) has biased composition (polar residues).

This sequence belongs to the class-II aminoacyl-tRNA synthetase family. Type-1 seryl-tRNA synthetase subfamily. As to quaternary structure, homodimer. The tRNA molecule may bind across the dimer. Interacts with SIRT2. Interacts with METTL6; interaction is required for the tRNA N(3)-methylcytidine methyltransferase activity of METTL6.

Its subcellular location is the cytoplasm. The protein localises to the nucleus. It catalyses the reaction tRNA(Ser) + L-serine + ATP = L-seryl-tRNA(Ser) + AMP + diphosphate + H(+). The enzyme catalyses tRNA(Sec) + L-serine + ATP = L-seryl-tRNA(Sec) + AMP + diphosphate + H(+). Its pathway is aminoacyl-tRNA biosynthesis; selenocysteinyl-tRNA(Sec) biosynthesis; L-seryl-tRNA(Sec) from L-serine and tRNA(Sec): step 1/1. Its function is as follows. Catalyzes the attachment of serine to tRNA(Ser) in a two-step reaction: serine is first activated by ATP to form Ser-AMP and then transferred to the acceptor end of tRNA(Ser). Is probably also able to aminoacylate tRNA(Sec) with serine, to form the misacylated tRNA L-seryl-tRNA(Sec), which will be further converted into selenocysteinyl-tRNA(Sec). In the nucleus, binds to the VEGFA core promoter and prevents MYC binding and transcriptional activation by MYC. Recruits SIRT2 to the VEGFA promoter, promoting deacetylation of histone H4 at 'Lys-16' (H4K16). Thereby, inhibits the production of VEGFA and sprouting angiogenesis mediated by VEGFA. In Macaca fascicularis (Crab-eating macaque), this protein is Serine--tRNA ligase, cytoplasmic (SARS1).